The primary structure comprises 520 residues: Putative cytochrome P450 CYP13A3 (520 aa).

Residue Cys-464 participates in heme binding.

Belongs to the cytochrome P450 family. It depends on heme as a cofactor.

Cytochromes P450 are a group of heme-thiolate monooxygenases. They oxidize a variety of structurally unrelated compounds, including steroids, fatty acids, and xenobiotics. In Caenorhabditis elegans, this protein is Putative cytochrome P450 CYP13A3 (cyp-13A3).